We begin with the raw amino-acid sequence, 475 residues long: Ribulose bisphosphate carboxylase large chain (475 aa).

The propeptide occupies 1–2; that stretch reads MS. N-acetylproline is present on Pro3. The residue at position 14 (Lys14) is an N6,N6,N6-trimethyllysine. Substrate is bound by residues Asn123 and Thr173. Residue Lys175 is the Proton acceptor of the active site. A substrate-binding site is contributed by Lys177. Positions 201, 203, and 204 each coordinate Mg(2+). Lys201 carries the N6-carboxylysine modification. His294 (proton acceptor) is an active-site residue. Arg295, His327, and Ser379 together coordinate substrate.

This sequence belongs to the RuBisCO large chain family. Type I subfamily. As to quaternary structure, heterohexadecamer of 8 large chains and 8 small chains; disulfide-linked. The disulfide link is formed within the large subunit homodimers. The cofactor is Mg(2+). Post-translationally, the disulfide bond which can form in the large chain dimeric partners within the hexadecamer appears to be associated with oxidative stress and protein turnover.

It is found in the plastid. The protein resides in the chloroplast. It carries out the reaction 2 (2R)-3-phosphoglycerate + 2 H(+) = D-ribulose 1,5-bisphosphate + CO2 + H2O. The enzyme catalyses D-ribulose 1,5-bisphosphate + O2 = 2-phosphoglycolate + (2R)-3-phosphoglycerate + 2 H(+). In terms of biological role, ruBisCO catalyzes two reactions: the carboxylation of D-ribulose 1,5-bisphosphate, the primary event in carbon dioxide fixation, as well as the oxidative fragmentation of the pentose substrate in the photorespiration process. Both reactions occur simultaneously and in competition at the same active site. In Zygnema circumcarinatum (Green alga), this protein is Ribulose bisphosphate carboxylase large chain.